A 504-amino-acid polypeptide reads, in one-letter code: Cytochrome P450 2S1 (504 aa).

C440 is a heme binding site.

This sequence belongs to the cytochrome P450 family. Requires heme as cofactor. As to expression, expressed at higher levels in extrahepatic tissues including trachea, lung, stomach, small intestine, colon, kidney, breast, placenta and spleen. Expressed in peripheral blood leukocytes. Constitutively expressed in skin (at protein level).

It is found in the endoplasmic reticulum membrane. It localises to the microsome membrane. It carries out the reaction all-trans-retinoate + reduced [NADPH--hemoprotein reductase] + O2 = all-trans-5,6-epoxyretinoate + oxidized [NADPH--hemoprotein reductase] + H2O + H(+). It catalyses the reaction all-trans-retinoate + reduced [NADPH--hemoprotein reductase] + O2 = all-trans-4-hydroxyretinoate + oxidized [NADPH--hemoprotein reductase] + H2O + H(+). The enzyme catalyses (5S)-hydroperoxy-(6E,8Z,11Z,14Z)-eicosatetraenoate = 5-oxo-(6E,8Z,11Z,14Z)-eicosatetraenoate + H2O. The catalysed reaction is (12S)-hydroperoxy-(5Z,8Z,10E,14Z)-eicosatetraenoate = 12-oxo-(5Z,8Z,10E,14Z)-eicosatetraenoate + H2O. It carries out the reaction (15S)-hydroperoxy-(5Z,8Z,11Z,13E)-eicosatetraenoate = 15-oxo-(5Z,8Z,11Z,13E)-eicosatetraenoate + H2O. It catalyses the reaction prostaglandin H2 = thromboxane A2. The enzyme catalyses prostaglandin H2 = (12S)-hydroxy-(5Z,8E,10E)-heptadecatrienoate + malonaldehyde. The catalysed reaction is (13S)-hydroperoxy-(9Z,11E)-octadecadienoate = 13-oxo-(9Z,11E)-octadecadienoate + H2O. It functions in the pathway lipid metabolism; fatty acid metabolism. Its function is as follows. A cytochrome P450 monooxygenase involved in the metabolism of retinoids and eicosanoids. In epidermis, may contribute to the oxidative metabolism of all-trans-retinoic acid. For this activity, uses molecular oxygen inserting one oxygen atom into a substrate, and reducing the second into a water molecule, with two electrons provided by NADPH via cytochrome P450 reductase (NADPH--hemoprotein reductase). Additionally, displays peroxidase and isomerase activities toward various oxygenated eicosanoids such as prostaglandin H2 (PGH2) and hydroperoxyeicosatetraenoates (HPETEs). Independently of cytochrome P450 reductase, NADPH, and O2, catalyzes the breakdown of PGH2 to hydroxyheptadecatrienoic acid (HHT) and malondialdehyde (MDA), which is known to act as a mediator of DNA damage. This is Cytochrome P450 2S1 from Homo sapiens (Human).